Reading from the N-terminus, the 197-residue chain is Carbohydrate-binding domain-containing protein C2E1P3.05c (197 aa).

Residues 1–23 (MLTQSLFLTVLTLALSLVSKTSA) form the signal peptide. 2 CBM1 domains span residues 25–61 (QCSPRYGTCGGIYYDGPTCCVVGSSCIYSNPWYSQCI) and 68–104 (PCAKLYQQCGGINYNGPTCCEPGSECIYNGPYYSQCI). Cystine bridges form between Cys-33–Cys-50, Cys-44–Cys-60, Cys-76–Cys-93, and Cys-87–Cys-103. The disordered stretch occupies residues 115 to 163 (SSAASSTTSTTSSSSLVSSTTLTSSSPSAVSSTTSIPSISSTISSSVST). N-linked (GlcNAc...) asparagine glycosylation is found at Asn-182 and Asn-193.

Its subcellular location is the secreted. This Schizosaccharomyces pombe (strain 972 / ATCC 24843) (Fission yeast) protein is Carbohydrate-binding domain-containing protein C2E1P3.05c.